The sequence spans 286 residues: Master replication protein (286 aa).

The CRESS-DNA virus Rep endonuclease domain maps to 2 to 96; it reads ARQVICWCFT…VEGPWEFGEF (95 aa). Residues 9–12 carry the RCR-1 motif; sequence CFTL. A divalent metal cation contacts are provided by E33 and H41. Residues 41–43 carry the RCR-2 motif; that stretch reads HYQ. Positions 50 to 70 match the Nuclear localization signal motif; that stretch reads KRTSLVQMKKLLPGAHLEKRR. Catalysis depends on Y79, which acts as the For DNA cleavage activity. The short motif at 79–82 is the RCR-3 element; that stretch reads YAMK. Position 84 (D84) interacts with a divalent metal cation. The Nuclear localization signal signature appears at 96–102; it reads FKEVLED. 180 to 188 is a binding site for ATP; the sequence is GPQGGEGKT.

It belongs to the nanoviridea/circoviridae replication-associated protein family. As to quaternary structure, homooligomer (Potential). Rep binds to repeated DNA motifs (iterons). Mg(2+) is required as a cofactor. It depends on Mn(2+) as a cofactor.

Its subcellular location is the host nucleus. The catalysed reaction is ATP + H2O = ADP + phosphate + H(+). In terms of biological role, essential for the replication of all genomic viral ssDNA (trans-replication). The closed circular ssDNA genome is first converted to a superhelical dsDNA. Rep binds a specific hairpin at the genome origin of replication. Introduces an endonucleolytic nick within the conserved sequence 5'-A[GT]TATTAC-3' in the intergenic region of the genome, thereby initiating the rolling circle replication (RCR). Following cleavage, binds covalently to the 5'-phosphate of DNA as a tyrosyl ester. The cleavage gives rise to a free 3'-OH that serves as a primer for the cellular DNA polymerase. The polymerase synthesizes the (+) strand DNA by rolling circle mechanism. After one round of replication, a Rep-catalyzed nucleotidyl transfer reaction releases a circular single-stranded virus genome, thereby terminating the replication. Displays origin-specific DNA cleavage, nucleotidyl transferase, ATPase and helicase activities. The chain is Master replication protein (DNA-R) from Subterranean clover stunt virus (strain F) (SCSV).